Here is a 591-residue protein sequence, read N- to C-terminus: MKKISLPKIGIRPVIDGRRMGVRESLEEQTMNMAKATAALLTEKLRHACGAAVECVISDTCIAGMAEAAACEEKFSSQNVGLTITVTPCWCYGSETIDMDPTRPKAIWGFNGTERPGAVYLAAALAAHSQKGIPAFSIYGHDVQDADDTSIPADVEEKLLRFARAGLAVASMKGKSYLSLGGVSMGIAGSIVDHNFFESWLGMKVQAVDMTELRRRIDQKIYDEAELEMALAWADKNFRYGEDENNKQYQRNAEQSRAVLRESLLMAMCIRDMMQGNSKLADIGRVEESLGYNAIAAGFQGQRHWTDQYPNGDTAEAILNSSFDWNGVREPFVVATENDSLNGVAMLMGHQLTGTAQVFADVRTYWSPEAIERVTGHKLDGLAEHGIIHLINSGSAALDGSCKQRDSEGNPTMKPHWEISQQEADACLAATEWCPAIHEYFRGGGYSSRFLTEGGVPFTMTRVNIIKGLGPVLQIAEGWSVELPKDVHDILNKRTNSTWPTTWFAPRLTGKGPFTDVYSVMANWGANHGVLTIGHVGADFITLASMLRIPVCMHNVEETKVYRPSAWAAHGMDIEGQDYRACQNYGPLYKR.

Residues Glu-337 and Asp-361 each act as proton acceptor in the active site. Mn(2+) is bound by residues Glu-337, Asp-361, and His-528.

This sequence belongs to the L-fucose isomerase family. Homohexamer. The cofactor is Mn(2+).

It is found in the cytoplasm. It catalyses the reaction L-fucose = L-fuculose. The catalysed reaction is D-arabinose = D-ribulose. The enzyme catalyses L-xylopyranose = L-xylulose. It participates in carbohydrate degradation; L-fucose degradation; L-lactaldehyde and glycerone phosphate from L-fucose: step 1/3. Its activity is regulated as follows. Inhibited by ribitol, L-arabitol and dulcitol. Isomerization of L-xylulose to L-xylose is inhibited by xylitol. Converts the aldose L-fucose into the corresponding ketose L-fuculose. Also converts D-arabinose into D-ribulose. In addition, catalyzes the isomerization of L-xylulose to L-xylose. The polypeptide is L-fucose isomerase (Escherichia coli (strain K12)).